Here is a 470-residue protein sequence, read N- to C-terminus: Nuclear receptor subfamily 0 group B member 1 (470 aa).

A run of 3 repeats spans residues 1 to 67, 68 to 133, and 134 to 200. The 4 X 67 AA tandem repeats stretch occupies residues 1–253; sequence MAGENHQWQG…RPVALKNPQV (253 aa). 3 short sequence motifs (LXXLL motif) span residues 13 to 17, 80 to 84, and 146 to 150; these read LYNML, LYSML, and LYSLL. The 4; truncated repeat unit spans residues 201 to 253; it reads FCGEDHPQQGSTLYCMPTSTNQAQAAPEERPRAPWWDTSSGALRPVALKNPQV. The NR LBD domain occupies 205-469; that stretch reads DHPQQGSTLY…DMMLEMLCTK (265 aa). An AF-2 motif motif is present at residues 461-466; the sequence is MMLEML.

It belongs to the nuclear hormone receptor family. NR0 subfamily. In terms of assembly, homodimer. Interacts with NR5A1, NR5A2, NR0B2 and with COPS2. Interacts with ESRRB; represses ESRRB activity at the GATA6 promoter.

It is found in the nucleus. It localises to the cytoplasm. In terms of biological role, nuclear receptor that lacks a DNA-binding domain and acts as a corepressor that inhibits the transcriptional activity of other nuclear receptors through heterodimeric interactions. Component of a cascade required for the development of the hypothalamic-pituitary-adrenal-gonadal axis. May also have a role in the development of the embryo and in the maintenance of embryonic stem cell pluripotency. The sequence is that of Nuclear receptor subfamily 0 group B member 1 (NR0B1) from Macaca mulatta (Rhesus macaque).